Reading from the N-terminus, the 307-residue chain is UDP-3-O-acyl-N-acetylglucosamine deacetylase (307 aa).

Positions 80, 239, and 243 each coordinate Zn(2+). Residue histidine 266 is the Proton donor of the active site.

The protein belongs to the LpxC family. Zn(2+) is required as a cofactor.

The catalysed reaction is a UDP-3-O-[(3R)-3-hydroxyacyl]-N-acetyl-alpha-D-glucosamine + H2O = a UDP-3-O-[(3R)-3-hydroxyacyl]-alpha-D-glucosamine + acetate. The protein operates within glycolipid biosynthesis; lipid IV(A) biosynthesis; lipid IV(A) from (3R)-3-hydroxytetradecanoyl-[acyl-carrier-protein] and UDP-N-acetyl-alpha-D-glucosamine: step 2/6. In terms of biological role, catalyzes the hydrolysis of UDP-3-O-myristoyl-N-acetylglucosamine to form UDP-3-O-myristoylglucosamine and acetate, the committed step in lipid A biosynthesis. This is UDP-3-O-acyl-N-acetylglucosamine deacetylase from Neisseria meningitidis serogroup C (strain 053442).